Consider the following 270-residue polypeptide: Large ribosomal subunit protein uL10 (270 aa).

Residues 234–270 (VTELEAGKTRPKREGNRRQAMNGDEMDEDQSSDEDSD) are disordered. A compositionally biased stretch (basic and acidic residues) spans 238 to 250 (EAGKTRPKREGNR). Over residues 257 to 270 (DEMDEDQSSDEDSD) the composition is skewed to acidic residues.

Belongs to the universal ribosomal protein uL10 family. In terms of assembly, associates with the pre-60S ribosomal particle.

It localises to the nucleus. The protein localises to the nucleolus. Its subcellular location is the cytoplasm. Functionally, component of the ribosome assembly machinery. Nuclear paralog of the ribosomal protein P0, it binds pre-60S subunits at an early stage of assembly in the nucleolus, and is replaced by P0 in cytoplasmic pre-60S subunits and mature 80S ribosomes. The polypeptide is Large ribosomal subunit protein uL10 (Chaetomium thermophilum (strain DSM 1495 / CBS 144.50 / IMI 039719) (Thermochaetoides thermophila)).